The primary structure comprises 1145 residues: DNA-directed RNA polymerase subunit beta (1145 aa).

The segment covering 1101–1112 (LPEERRVSSSKE) has biased composition (basic and acidic residues). The segment at 1101–1145 (LPEERRVSSSKEEIEEEEEVEDNSDEFDETFLEEAEDDFSLDDED) is disordered. Acidic residues predominate over residues 1113–1145 (EIEEEEEVEDNSDEFDETFLEEAEDDFSLDDED).

Belongs to the RNA polymerase beta chain family. In terms of assembly, the RNAP catalytic core consists of 2 alpha, 1 beta, 1 beta' and 1 omega subunit. When a sigma factor is associated with the core the holoenzyme is formed, which can initiate transcription.

The catalysed reaction is RNA(n) + a ribonucleoside 5'-triphosphate = RNA(n+1) + diphosphate. Functionally, DNA-dependent RNA polymerase catalyzes the transcription of DNA into RNA using the four ribonucleoside triphosphates as substrates. The sequence is that of DNA-directed RNA polymerase subunit beta from Desulforamulus reducens (strain ATCC BAA-1160 / DSM 100696 / MI-1) (Desulfotomaculum reducens).